Consider the following 178-residue polypeptide: Ribosome maturation factor RimM (178 aa).

The PRC barrel domain occupies 103 to 177; that stretch reads SKDEYYFFEI…KIVVKVPEWL (75 aa).

This sequence belongs to the RimM family. In terms of assembly, binds ribosomal protein uS19.

It localises to the cytoplasm. In terms of biological role, an accessory protein needed during the final step in the assembly of 30S ribosomal subunit, possibly for assembly of the head region. Essential for efficient processing of 16S rRNA. May be needed both before and after RbfA during the maturation of 16S rRNA. It has affinity for free ribosomal 30S subunits but not for 70S ribosomes. The sequence is that of Ribosome maturation factor RimM from Thermosipho africanus (strain TCF52B).